A 1379-amino-acid polypeptide reads, in one-letter code: Partitioning defective protein 3 (1379 aa).

The segment covering 1-23 has biased composition (low complexity); it reads MSASSTSSSSTSCPEGGEPSGSC. 2 disordered regions span residues 1–32 and 208–335; these read MSASSTSSSSTSCPEGGEPSGSCKSSDEGEST and YNVG…SDRK. 2 stretches are compositionally biased toward polar residues: residues 239-256 and 272-284; these read SFDQIPQSGLRVSTPKPS and ILRSSLRTEASGS. Basic and acidic residues-rich tracts occupy residues 302–315 and 322–335; these read EVEKKLAEQDERKS and DKNPGRFARGSDRK. PDZ domains are found at residues 381–483 and 515–599; these read LVTF…IINR and VVEL…SRVS. A coiled-coil region spans residues 606-626; sequence TSASSENKENEETLKVVEEEK. Positions 659–750 constitute a PDZ 3 domain; the sequence is VIPFINGSSS…EVGMISSNVR (92 aa). Disordered regions lie at residues 767-873, 887-918, 949-1085, 1273-1301, and 1350-1379; these read DLSR…MGAA, HQRQNSAPTSSTQKRSKSQPRSSSQRNYRSPM, QSME…GGNV, VEPVSGSSASATDRRGRSTSSGAVASGSS, and AYETRGGGAGGSPSQYRRRDQGPPHRFPQY. 2 stretches are compositionally biased toward low complexity: residues 776-786 and 798-826; these read SSPSPSSRMSS and ATRGTSSSGADSSHSRQSSASSAVPAVPA. Composition is skewed to basic and acidic residues over residues 828–844 and 854–869; these read LTERDSIVSDGTSRNDE and FNREGLGRKSLSEKRG. Over residues 894–912 the composition is skewed to low complexity; sequence PTSSTQKRSKSQPRSSSQR. The segment covering 967 to 977 has biased composition (polar residues); the sequence is QIPTGSSSKVQ. Composition is skewed to basic and acidic residues over residues 1030–1040 and 1048–1060; these read KSRDASPEKTP and SVERPKSIIDERN. The span at 1290 to 1301 shows a compositional bias: low complexity; the sequence is STSSGAVASGSS.

The protein belongs to the PAR3 family. As to quaternary structure, required, together with pkc-3, for the localization of par-6; par-6 is involved in localizing/maintaining par-3 at the cell periphery. Interacts with par-6 and pkc-3 for localization at the periphery of anterior cortex of the embryo. As to expression, asymmetrically distributed at the periphery of the zygote and in dividing blastomeres of the germline lineage. Coexpressed with par-6; patchy expression observed at the periphery after completion of meiosis I and in meiosis II. On completion of metaphase II, expression is restricted to the anterior 85% of embryo length; this decreases to 55% in embryos between prophase and telophase of the first mitosis. During the first cleavage, expression is detected in the advancing furrow. Transiently coexpressed and colocalized asymmetrically with par-6 and pkc-3, in the developing somatic gonad, including the spermathecal precursor cells of L4 larvae.

It is found in the cytoplasm. In cooperation with pkc-3, required for establishing cell polarity and regulating spindle orientation in the early embryo. Localization is crucial for recruiting par-6 and pkc-3 to the peripheral apical cortex and restricting par-2 to basolateral surfaces. Necessary for apicobasal and anterior-posterior asymmetries associated with cell adhesion and gastrulation during the first few cycles of embryogenesis, and also for epithelial cell polarity in the distal spermatheca. Regulates the asymmetric localization of csnk-1, ppk-1 and gpr-1/2 during the first embryonic division. This is Partitioning defective protein 3 from Caenorhabditis elegans.